We begin with the raw amino-acid sequence, 453 residues long: Kynureninase (453 aa).

Pyridoxal 5'-phosphate-binding positions include Leu114, Thr115, 142 to 145 (FPSD), Asp232, His235, and Tyr257. Residue Lys258 is modified to N6-(pyridoxal phosphate)lysine. Trp286 serves as a coordination point for pyridoxal 5'-phosphate.

Belongs to the kynureninase family. As to quaternary structure, homodimer. The cofactor is pyridoxal 5'-phosphate.

It is found in the cytoplasm. The catalysed reaction is L-kynurenine + H2O = anthranilate + L-alanine + H(+). It carries out the reaction 3-hydroxy-L-kynurenine + H2O = 3-hydroxyanthranilate + L-alanine + H(+). Its pathway is amino-acid degradation; L-kynurenine degradation; L-alanine and anthranilate from L-kynurenine: step 1/1. It participates in cofactor biosynthesis; NAD(+) biosynthesis; quinolinate from L-kynurenine: step 2/3. Catalyzes the cleavage of L-kynurenine (L-Kyn) and L-3-hydroxykynurenine (L-3OHKyn) into anthranilic acid (AA) and 3-hydroxyanthranilic acid (3-OHAA), respectively. The sequence is that of Kynureninase from Cryptococcus neoformans var. neoformans serotype D (strain B-3501A) (Filobasidiella neoformans).